Reading from the N-terminus, the 123-residue chain is WAP four-disulfide core domain protein 5 (123 aa).

The first 24 residues, 1–24, serve as a signal peptide directing secretion; sequence MRTQSLLLLGALLAVGSQLPAVFG. WAP domains follow at residues 27–74 and 75–121; these read KGEK…VPRV and SVKL…RDPA. 8 disulfides stabilise this stretch: Cys34-Cys62, Cys41-Cys66, Cys49-Cys61, Cys55-Cys70, Cys81-Cys109, Cys88-Cys113, Cys96-Cys108, and Cys102-Cys117.

It is found in the secreted. Putative acid-stable proteinase inhibitor. The protein is WAP four-disulfide core domain protein 5 (WFDC5) of Gorilla gorilla gorilla (Western lowland gorilla).